Reading from the N-terminus, the 423-residue chain is Aspartate aminotransferase, mitochondrial (423 aa).

The transit peptide at 1–22 directs the protein to the mitochondrion; that stretch reads MALLQSRLLLSAPRRAAATARA. Residues Gly58, Trp155, and Asn208 each contribute to the substrate site. Lys272 is subject to N6-(pyridoxal phosphate)lysine. A substrate-binding site is contributed by Arg400.

This sequence belongs to the class-I pyridoxal-phosphate-dependent aminotransferase family. Homodimer. Pyridoxal 5'-phosphate serves as cofactor. As to expression, detected in heart (at protein level).

Its subcellular location is the mitochondrion matrix. It catalyses the reaction L-aspartate + 2-oxoglutarate = oxaloacetate + L-glutamate. It carries out the reaction L-kynurenine + 2-oxoglutarate = kynurenate + L-glutamate + H2O. Its function is as follows. Catalyzes the irreversible transamination of the L-tryptophan metabolite L-kynurenine to form kynurenic acid (KA). As a member of the malate-aspartate shuttle, it has a key role in the intracellular NAD(H) redox balance. Is important for metabolite exchange between mitochondria and cytosol, and for amino acid metabolism. The polypeptide is Aspartate aminotransferase, mitochondrial (GOT2) (Gallus gallus (Chicken)).